Consider the following 339-residue polypeptide: 4-dimethylallyltryptophan N-methyltransferase easF (339 aa).

This sequence belongs to the methyltransferase superfamily. Homodimer.

It carries out the reaction 4-(3-methylbut-2-enyl)-L-tryptophan + S-adenosyl-L-methionine = 4-(3-methylbut-2-enyl)-L-abrine + S-adenosyl-L-homocysteine + H(+). It functions in the pathway alkaloid biosynthesis; ergot alkaloid biosynthesis. 4-dimethylallyltryptophan N-methyltransferase; part of the gene cluster that mediates the biosynthesis of fumiclavanine C, a fungal ergot alkaloid. DmaW catalyzes the first step of ergot alkaloid biosynthesis by condensing dimethylallyl diphosphate (DMAP) and tryptophan to form 4-dimethylallyl-L-tryptophan. The second step is catalyzed by the methyltransferase easF that methylates 4-dimethylallyl-L-tryptophan in the presence of S-adenosyl-L-methionine, resulting in the formation of 4-dimethylallyl-L-abrine. The catalase easC and the FAD-dependent oxidoreductase easE then transform 4-dimethylallyl-L-abrine to chanoclavine-I which is further oxidized by EasD in the presence of NAD(+), resulting in the formation of chanoclavine-I aldehyde. EasA reduces chanoclavine-I aldehyde to dihydrochanoclavine-I aldehyde that spontaneously dehydrates to form 6,8-dimethyl-6,7-didehydroergoline. EasG then catalyzes the reduction of 6,8-dimethyl-6,7-didehydroergoline to form festuclavine. Hydrolysis of festuclavine by easM then leads to the formation of fumigaclavine B which is in turn acetylated by easN to fumigaclavine A. Finally, easL catalyzes the conversion of fumigaclavine A into fumigaclavine C by attaching a dimethylallyl moiety to C-2 of the indole nucleus. The sequence is that of 4-dimethylallyltryptophan N-methyltransferase easF from Aspergillus fumigatus (strain ATCC MYA-4609 / CBS 101355 / FGSC A1100 / Af293) (Neosartorya fumigata).